Here is a 29-residue protein sequence, read N- to C-terminus: Snaclec multactivase regulatory subunit (29 aa).

Positions 1 to 29 (DCLPGWSVYEGRCYKVFNQKTWKAAEKFC) constitute a C-type lectin domain. An intrachain disulfide couples cysteine 2 to cysteine 13.

Belongs to the snaclec family. In terms of assembly, heterodimer of a metalloproteinase subunit and a regulatory subunit comprising two homologous polypeptides disulfide-linked. As to expression, expressed by the venom gland.

It is found in the secreted. Multactivase, a carinactivase-like calcium-dependent prothrombin activator, activates prothrombin via recognition of the calcium ion bound conformation of its gamma-carboxyglutamic acid (GLA) domain, and the subsequent conversion of prothrombin to active thrombin is catalyzed by the catalytic subunit. This is Snaclec multactivase regulatory subunit from Echis multisquamatus (Central Asian sand viper).